The primary structure comprises 418 residues: Argininosuccinate synthase (418 aa).

Position 16–24 (16–24) interacts with ATP; the sequence is AYSGGLDTS. Position 95 (tyrosine 95) interacts with L-citrulline. Glycine 125 provides a ligand contact to ATP. L-aspartate-binding residues include threonine 127, asparagine 131, and aspartate 132. Asparagine 131 is a binding site for L-citrulline. L-citrulline is bound by residues arginine 135, serine 183, glutamate 267, and tyrosine 279.

It belongs to the argininosuccinate synthase family. Type 1 subfamily. Homotetramer.

The protein localises to the cytoplasm. The enzyme catalyses L-citrulline + L-aspartate + ATP = 2-(N(omega)-L-arginino)succinate + AMP + diphosphate + H(+). It functions in the pathway amino-acid biosynthesis; L-arginine biosynthesis; L-arginine from L-ornithine and carbamoyl phosphate: step 2/3. This is Argininosuccinate synthase from Bifidobacterium adolescentis (strain ATCC 15703 / DSM 20083 / NCTC 11814 / E194a).